Here is a 232-residue protein sequence, read N- to C-terminus: Sugar fermentation stimulation protein homolog (232 aa).

It belongs to the SfsA family.

In Acidithiobacillus ferrooxidans (strain ATCC 23270 / DSM 14882 / CIP 104768 / NCIMB 8455) (Ferrobacillus ferrooxidans (strain ATCC 23270)), this protein is Sugar fermentation stimulation protein homolog.